The sequence spans 200 residues: Acyl-homoserine-lactone synthase (200 aa).

This sequence belongs to the autoinducer synthase family.

The enzyme catalyses a fatty acyl-[ACP] + S-adenosyl-L-methionine = an N-acyl-L-homoserine lactone + S-methyl-5'-thioadenosine + holo-[ACP] + H(+). Functionally, required for the synthesis of BHL (N-butanoyl-L-homoserine lactone). The polypeptide is Acyl-homoserine-lactone synthase (swrI) (Serratia liquefaciens).